Consider the following 692-residue polypeptide: MISFSHWNSHIRSGLSLSMIPSANSRFAFIIQRNYIPVVNSQNTRWKRLCGTQSVWSPYKKKHVLVNRLKHISLFPKPIFARKFTTRQKSEDQKQWRILRITFLVLPFTVGGLWILYRVKNRKNNIFSFDELELEERSNRPRSIFGKIKQFFNILLRSFNLFIIFSPIIITLPFIALISFLHLRSLSSLTVSIWLRFLVTQLERAGATFIKLGQWAASRTDLFPPAFCKTLSKLHSHVTPHSLAYTQSVICKTYKVESIEEIFVNFNPIPIGVGAIAQVYTATIKKAATQQDNSYFTSMLQSIGFRQKNISDAPVTQDVAIKVLHPNVEKYISLDLQILGFFAKLINLVPSMKWLSLPDEVKVFGAMLNQQLNLHYEALHLNQFRLNFRGNRYVEFPAPYDDYTTNQILLEDYMPGIPLSAFLKHKSGPFNKLLANTGNNALFQMLIVDNFTHADLHPGNVLVKFYKGIPKTIFNQDNEINDSIYKILSTCSTEEWDSAMEELNILGYRPTLVFLDAGLVTKLSTQDQKNFLDLFQAVLTFHGYEAGLLMVERSRQTERVINKDIFALKMEHLLNEIQKSTLSLKSLQIGTILQEVMTMAREHHVRIEANFANTVLSILLVEGAGRQLYPEMDLLSNATPYLRSASSKSNVSLTNPMVQLWIALEARQFLLLSTSKETVEKWVKSDMIAPNI.

A mitochondrion-targeting transit peptide spans 1–91 (MISFSHWNSH…RKFTTRQKSE (91 aa)). The next 2 membrane-spanning stretches (helical) occupy residues 96–116 (WRIL…LWIL) and 161–181 (LFII…ISFL).

Belongs to the protein kinase superfamily. ADCK protein kinase family.

It is found in the mitochondrion membrane. This chain is ABC1 family protein C21C3.03, mitochondrial, found in Schizosaccharomyces pombe (strain 972 / ATCC 24843) (Fission yeast).